The primary structure comprises 280 residues: Probable endonuclease 4 (280 aa).

9 residues coordinate Zn(2+): His-68, His-108, Glu-143, Asp-177, His-180, His-214, Asp-227, His-229, and Glu-259.

This sequence belongs to the AP endonuclease 2 family. The cofactor is Zn(2+).

It catalyses the reaction Endonucleolytic cleavage to 5'-phosphooligonucleotide end-products.. Functionally, endonuclease IV plays a role in DNA repair. It cleaves phosphodiester bonds at apurinic or apyrimidinic (AP) sites, generating a 3'-hydroxyl group and a 5'-terminal sugar phosphate. This chain is Probable endonuclease 4, found in Cenarchaeum symbiosum (strain A).